The primary structure comprises 599 residues: Elongation factor 4 (599 aa).

Residues 2 to 184 (KHIRNFSIIA…RLVRDIPPPQ (183 aa)) enclose the tr-type G domain. GTP is bound by residues 14-19 (DHGKST) and 131-134 (NKID).

Belongs to the TRAFAC class translation factor GTPase superfamily. Classic translation factor GTPase family. LepA subfamily.

It is found in the cell inner membrane. It catalyses the reaction GTP + H2O = GDP + phosphate + H(+). Functionally, required for accurate and efficient protein synthesis under certain stress conditions. May act as a fidelity factor of the translation reaction, by catalyzing a one-codon backward translocation of tRNAs on improperly translocated ribosomes. Back-translocation proceeds from a post-translocation (POST) complex to a pre-translocation (PRE) complex, thus giving elongation factor G a second chance to translocate the tRNAs correctly. Binds to ribosomes in a GTP-dependent manner. The chain is Elongation factor 4 from Yersinia enterocolitica serotype O:8 / biotype 1B (strain NCTC 13174 / 8081).